Here is a 110-residue protein sequence, read N- to C-terminus: Iron-sulfur cluster assembly protein CyaY (110 aa).

Belongs to the frataxin family.

In terms of biological role, involved in iron-sulfur (Fe-S) cluster assembly. May act as a regulator of Fe-S biogenesis. In Pseudomonas fluorescens (strain SBW25), this protein is Iron-sulfur cluster assembly protein CyaY.